We begin with the raw amino-acid sequence, 94 residues long: Integration host factor subunit beta (94 aa).

Belongs to the bacterial histone-like protein family. Heterodimer of an alpha and a beta chain.

In terms of biological role, this protein is one of the two subunits of integration host factor, a specific DNA-binding protein that functions in genetic recombination as well as in transcriptional and translational control. In Buchnera aphidicola subsp. Acyrthosiphon pisum (strain 5A), this protein is Integration host factor subunit beta.